The primary structure comprises 394 residues: G2/mitotic-specific cyclin-B (394 aa).

Residues 360–394 form a disordered region; sequence QSHPSPNSRLDQEEDMASSKFMSDQQATQELKSIR. Positions 379–394 are enriched in polar residues; the sequence is KFMSDQQATQELKSIR.

Belongs to the cyclin family. Cyclin AB subfamily. Interacts with the CDK1 protein kinase to form a serine/threonine kinase holoenzyme complex also known as maturation promoting factor (MPF). The cyclin subunit imparts substrate specificity to the complex.

Its function is as follows. Essential for the control of the cell cycle at the G2/M (mitosis) transition. The chain is G2/mitotic-specific cyclin-B from Patiria pectinifera (Starfish).